Reading from the N-terminus, the 453-residue chain is Cysteine--tRNA ligase (453 aa).

Cys30 is a Zn(2+) binding site. The 'HIGH' region motif lies at 32–42 (PTVYDRAHLGN). Positions 212, 237, and 241 each coordinate Zn(2+). The 'KMSKS' region signature appears at 268–272 (KMSKS). Residue Lys271 participates in ATP binding.

It belongs to the class-I aminoacyl-tRNA synthetase family. As to quaternary structure, monomer. The cofactor is Zn(2+).

Its subcellular location is the cytoplasm. It carries out the reaction tRNA(Cys) + L-cysteine + ATP = L-cysteinyl-tRNA(Cys) + AMP + diphosphate. This is Cysteine--tRNA ligase from Jannaschia sp. (strain CCS1).